A 566-amino-acid polypeptide reads, in one-letter code: Acyl-CoA synthetase ALT10 (566 aa).

196-207 (MLFTSGTTGAPK) contributes to the AMP binding site. The segment at 473 to 551 (EVEHAALSHE…DAVHYNRTGK (79 aa)) is AMP-binding.

The protein belongs to the ATP-dependent AMP-binding enzyme family.

The protein operates within mycotoxin biosynthesis. Functionally, acyl-CoA synthetase; part of the gene cluster that mediates the biosynthesis of the host-selective toxins (HSTs) AAL-toxins, sphinganine-analog mycotoxins responsible for Alternaria stem canker on tomato by the tomato pathotype. The biosynthesis starts with the polyketide synthase ALT1-catalyzed C-16 carbon chain assembly from one starter acetyl-CoA unit with malonyl-CoA extender units. ALT1 also selectively transfers methyl groups at the first and the third cycle of chain elongation for AAL toxin. The C-16 polyketide chain is released from the enzyme by a nucleophilic attack of a carbanion, which is derived from R-carbon of glycin by decarboxylation, on the carbonyl carbon of polyketide acyl chain. This step is probably catalyzed by a pyridoxal 5'-phosphate-dependent aminoacyl transferase ALT4. The respective functions of the other enzymes encoded by the cluster have still to be elucidated. The sphingosine N-acyltransferase-like protein ALT7 seems not to act as a resistance/self-tolerance factor against the toxin in the toxin biosynthetic gene cluster, contrary to what is expected. The protein is Acyl-CoA synthetase ALT10 of Alternaria alternata (Alternaria rot fungus).